A 200-amino-acid polypeptide reads, in one-letter code: NADH-quinone oxidoreductase subunit C (200 aa).

This sequence belongs to the complex I 30 kDa subunit family. NDH-1 is composed of 14 different subunits. Subunits NuoB, C, D, E, F, and G constitute the peripheral sector of the complex.

The protein localises to the cell inner membrane. The catalysed reaction is a quinone + NADH + 5 H(+)(in) = a quinol + NAD(+) + 4 H(+)(out). Its function is as follows. NDH-1 shuttles electrons from NADH, via FMN and iron-sulfur (Fe-S) centers, to quinones in the respiratory chain. The immediate electron acceptor for the enzyme in this species is believed to be ubiquinone. Couples the redox reaction to proton translocation (for every two electrons transferred, four hydrogen ions are translocated across the cytoplasmic membrane), and thus conserves the redox energy in a proton gradient. The polypeptide is NADH-quinone oxidoreductase subunit C (Rhizobium etli (strain ATCC 51251 / DSM 11541 / JCM 21823 / NBRC 15573 / CFN 42)).